A 355-amino-acid chain; its full sequence is Glutamine synthetase root isozyme 4 (355 aa).

In terms of domain architecture, GS beta-grasp spans 19–99; that stretch reads IIAEYIWIGG…VMCDCYTPAG (81 aa). Residues 37-66 form a disordered region; sequence ARTLPGPVTDPSKLPKWNYDGSSTGQAPGE. The GS catalytic domain maps to 106–355; that stretch reads KRYSAAKIFS…IAETTIVWKP (250 aa).

This sequence belongs to the glutamine synthetase family. Homooctamer. In terms of tissue distribution, found in all the tissues examined with higher expression found in tissues of the root, stem and seedling shoot.

It is found in the cytoplasm. The enzyme catalyses L-glutamate + NH4(+) + ATP = L-glutamine + ADP + phosphate + H(+). Plays a role in the flow of nitrogen into nitrogenous organic compounds. The protein is Glutamine synthetase root isozyme 4 (GLN5) of Zea mays (Maize).